We begin with the raw amino-acid sequence, 123 residues long: MPPKTSGKAAKKAGKAQKNITKTDKKKKRKRKESYAIYIYKVLKQVHPDTGISSKAMSIMNSFVNDIFERIAAEASRLAHYNKRSTITSREIQTAVRLLLPGELAKHAVSEGTKAVTKYTSSK.

The interval 1-30 (MPPKTSGKAAKKAGKAQKNITKTDKKKKRK) is disordered. Proline 2 bears the N-methylproline; partial mark. The residue at position 44 (lysine 44) is an N6-succinyllysine. A glycan (O-linked (GlcNAc) serine) is linked at serine 110. N6-succinyllysine occurs at positions 114 and 118. Residue lysine 118 forms a Glycyl lysine isopeptide (Lys-Gly) (interchain with G-Cter in ubiquitin) linkage.

Belongs to the histone H2B family. As to quaternary structure, the nucleosome is a histone octamer containing two molecules each of H2A, H2B, H3 and H4 assembled in one H3-H4 heterotetramer and two H2A-H2B heterodimers. The octamer wraps approximately 147 bp of DNA. Post-translationally, phosphorylated by the catalytic component of the Dbf4-dependent kinase (DDK) complex Cdc7. Monoubiquitination of Lys-118 by Bre1 gives a specific tag for epigenetic transcriptional activation and is also prerequisite for histone H3 'Lys-4' and 'Lys-79' methylation. Deubiquitination of Lys-118 by the SAGA complex is involved in activating transcription of a large subset of genes. In terms of processing, methylation at Pro-2 increases upon heat shock. Post-translationally, glcNAcylation at Ser-110 promotes monoubiquitination of Lys-118. It fluctuates in response to extracellular glucose, and associates with transcribed genes.

The protein localises to the nucleus. It is found in the chromosome. In terms of biological role, core component of nucleosome. Nucleosomes wrap and compact DNA into chromatin, limiting DNA accessibility to the cellular machineries which require DNA as a template. Histones thereby play a central role in transcription regulation, DNA repair, DNA replication and chromosomal stability. DNA accessibility is regulated via a complex set of post-translational modifications of histones, also called histone code, and nucleosome remodeling. This is Histone H2B (His2B) from Drosophila erecta (Fruit fly).